A 148-amino-acid chain; its full sequence is 3-hydroxyacyl-[acyl-carrier-protein] dehydratase FabZ (148 aa).

His55 is an active-site residue.

The protein belongs to the thioester dehydratase family. FabZ subfamily.

It localises to the cytoplasm. It catalyses the reaction a (3R)-hydroxyacyl-[ACP] = a (2E)-enoyl-[ACP] + H2O. Involved in unsaturated fatty acids biosynthesis. Catalyzes the dehydration of short chain beta-hydroxyacyl-ACPs and long chain saturated and unsaturated beta-hydroxyacyl-ACPs. The sequence is that of 3-hydroxyacyl-[acyl-carrier-protein] dehydratase FabZ from Haemophilus influenzae (strain PittEE).